The chain runs to 316 residues: Pantothenate kinase (316 aa).

95-102 is an ATP binding site; the sequence is GSVAVGKS.

The protein belongs to the prokaryotic pantothenate kinase family.

The protein resides in the cytoplasm. It carries out the reaction (R)-pantothenate + ATP = (R)-4'-phosphopantothenate + ADP + H(+). It participates in cofactor biosynthesis; coenzyme A biosynthesis; CoA from (R)-pantothenate: step 1/5. The polypeptide is Pantothenate kinase (Shigella boydii serotype 18 (strain CDC 3083-94 / BS512)).